We begin with the raw amino-acid sequence, 145 residues long: Transcription elongation factor 1 (145 aa).

Positions 25, 28, 49, and 52 each coordinate Zn(2+). Ser55 carries the phosphoserine modification. Residues 80–145 (VNSGRGSDTD…RGALVDSDDE (66 aa)) are disordered. 2 stretches are compositionally biased toward acidic residues: residues 88–104 (TDDGDEGSDSDYESDSE) and 113–126 (GEIDSDEEEVDSDE). Phosphoserine occurs at positions 117, 124, and 142.

This sequence belongs to the ELOF1 family.

It is found in the nucleus. Functionally, transcription elongation factor implicated in the maintenance of proper chromatin structure in actively transcribed regions. In Saccharomyces cerevisiae (strain ATCC 204508 / S288c) (Baker's yeast), this protein is Transcription elongation factor 1 (ELF1).